The chain runs to 223 residues: Thiamine-phosphate synthase (223 aa).

4-amino-2-methyl-5-(diphosphooxymethyl)pyrimidine is bound by residues 42 to 46 and asparagine 83; that span reads QLRDK. Positions 84 and 103 each coordinate Mg(2+). Serine 122 is a 4-amino-2-methyl-5-(diphosphooxymethyl)pyrimidine binding site. Residue 148 to 150 coordinates 2-[(2R,5Z)-2-carboxy-4-methylthiazol-5(2H)-ylidene]ethyl phosphate; the sequence is TPT. Lysine 151 is a binding site for 4-amino-2-methyl-5-(diphosphooxymethyl)pyrimidine. Residue glycine 179 participates in 2-[(2R,5Z)-2-carboxy-4-methylthiazol-5(2H)-ylidene]ethyl phosphate binding.

The protein belongs to the thiamine-phosphate synthase family. Requires Mg(2+) as cofactor.

The enzyme catalyses 2-[(2R,5Z)-2-carboxy-4-methylthiazol-5(2H)-ylidene]ethyl phosphate + 4-amino-2-methyl-5-(diphosphooxymethyl)pyrimidine + 2 H(+) = thiamine phosphate + CO2 + diphosphate. It catalyses the reaction 2-(2-carboxy-4-methylthiazol-5-yl)ethyl phosphate + 4-amino-2-methyl-5-(diphosphooxymethyl)pyrimidine + 2 H(+) = thiamine phosphate + CO2 + diphosphate. The catalysed reaction is 4-methyl-5-(2-phosphooxyethyl)-thiazole + 4-amino-2-methyl-5-(diphosphooxymethyl)pyrimidine + H(+) = thiamine phosphate + diphosphate. It participates in cofactor biosynthesis; thiamine diphosphate biosynthesis; thiamine phosphate from 4-amino-2-methyl-5-diphosphomethylpyrimidine and 4-methyl-5-(2-phosphoethyl)-thiazole: step 1/1. Condenses 4-methyl-5-(beta-hydroxyethyl)thiazole monophosphate (THZ-P) and 2-methyl-4-amino-5-hydroxymethyl pyrimidine pyrophosphate (HMP-PP) to form thiamine monophosphate (TMP). The chain is Thiamine-phosphate synthase from Mycobacterium avium (strain 104).